A 281-amino-acid polypeptide reads, in one-letter code: 2,3,4,5-tetrahydropyridine-2,6-dicarboxylate N-succinyltransferase (281 aa).

Substrate-binding residues include Arg108 and Asp145.

Belongs to the transferase hexapeptide repeat family. In terms of assembly, homotrimer.

The protein localises to the cytoplasm. The catalysed reaction is (S)-2,3,4,5-tetrahydrodipicolinate + succinyl-CoA + H2O = (S)-2-succinylamino-6-oxoheptanedioate + CoA. Its pathway is amino-acid biosynthesis; L-lysine biosynthesis via DAP pathway; LL-2,6-diaminopimelate from (S)-tetrahydrodipicolinate (succinylase route): step 1/3. The polypeptide is 2,3,4,5-tetrahydropyridine-2,6-dicarboxylate N-succinyltransferase (Rhodopseudomonas palustris (strain BisA53)).